Consider the following 25-residue polypeptide: SPbeta prophage-derived uncharacterized protein YotF (25 aa).

In Bacillus subtilis (strain 168), this protein is SPbeta prophage-derived uncharacterized protein YotF (yotF).